A 304-amino-acid chain; its full sequence is Porphobilinogen deaminase (304 aa).

S-(dipyrrolylmethanemethyl)cysteine is present on C241.

It belongs to the HMBS family. Monomer. The cofactor is dipyrromethane.

It carries out the reaction 4 porphobilinogen + H2O = hydroxymethylbilane + 4 NH4(+). The protein operates within porphyrin-containing compound metabolism; protoporphyrin-IX biosynthesis; coproporphyrinogen-III from 5-aminolevulinate: step 2/4. Functionally, tetrapolymerization of the monopyrrole PBG into the hydroxymethylbilane pre-uroporphyrinogen in several discrete steps. This is Porphobilinogen deaminase from Vesicomyosocius okutanii subsp. Calyptogena okutanii (strain HA).